The chain runs to 310 residues: tRNA dimethylallyltransferase (310 aa).

Residue 14–21 (GPTASGKS) participates in ATP binding. 16 to 21 (TASGKS) is a substrate binding site. Interaction with substrate tRNA stretches follow at residues 39 to 42 (DSMQ) and 163 to 167 (QRIVR).

This sequence belongs to the IPP transferase family. As to quaternary structure, monomer. Mg(2+) is required as a cofactor.

It catalyses the reaction adenosine(37) in tRNA + dimethylallyl diphosphate = N(6)-dimethylallyladenosine(37) in tRNA + diphosphate. Its function is as follows. Catalyzes the transfer of a dimethylallyl group onto the adenine at position 37 in tRNAs that read codons beginning with uridine, leading to the formation of N6-(dimethylallyl)adenosine (i(6)A). This Brucella ovis (strain ATCC 25840 / 63/290 / NCTC 10512) protein is tRNA dimethylallyltransferase.